A 602-amino-acid polypeptide reads, in one-letter code: Solute carrier organic anion transporter family member 1C1 (602 aa).

The Cytoplasmic segment spans residues 1–43 (MDTSSKENIQLFCKTSVQPVGRPSFKTEYPSSEEKQPCCGELK). Residues 44–63 (VFLGALSFVYFAKALAEGYL) traverse the membrane as a helical segment. Residues 64-82 (KSTITQIERRFDIPSSLVG) lie on the Extracellular side of the membrane. The chain crosses the membrane as a helical span at residues 83–103 (VIDGSFEIGNLLVITFVSYFG). Residues 104–109 (AKLHRP) are Cytoplasmic-facing. A helical membrane pass occupies residues 110–134 (KIIGAGCLIMGVGTLLIAMPQFFME). Residues 135 to 139 (QYKYE) are Extracellular-facing. A helical transmembrane segment spans residues 140-156 (IYSPSSNSTLSISPCLL). Residues 157–238 (ESSSQLPVSV…ARDFLPSLKY (82 aa)) are Cytoplasmic-facing. The segment at 190–216 (PRSQSREDSNSSSEKSKFIRDDHTDYQ) is disordered. The segment covering 193–214 (QSREDSNSSSEKSKFIRDDHTD) has biased composition (basic and acidic residues). Residues 239-260 (LFGNPVYFLYLCTSTVQFNSLF) traverse the membrane as a helical segment. Residues 261–280 (GMVTYKPKYIEQQYGQSSSR) are Extracellular-facing. The helical transmembrane segment at 281-304 (ANFVIGLINIPAVALGIFSGGIAM) threads the bilayer. The Cytoplasmic portion of the chain corresponds to 305-308 (KKFR). Residues 309 to 332 (ISVCGAAKLYLGSSVFGYLLFLSL) form a helical membrane-spanning segment. Residues 333–444 (FALGCENSDV…NGCPQMFLYF (112 aa)) are Extracellular-facing. The 56-residue stretch at 360–415 (RALFSDCNPRCKCSETKWEPMCGENGITYVSACPAGCQTSNRSGKNIIFYNCTCVG) folds into the Kazal-like domain. Cystine bridges form between Cys366–Cys396, Cys372–Cys392, and Cys381–Cys413. N-linked (GlcNAc...) asparagine glycosylation is found at Asn400, Asn410, and Asn423. A helical membrane pass occupies residues 445–467 (LVISVITSYTLSLGGIPGYILLL). Topologically, residues 468 to 476 (RCIKPQLKS) are cytoplasmic. The chain crosses the membrane as a helical span at residues 477-502 (FALGIYTLSIRVLAGIPAPVYFGVLI). Topologically, residues 503 to 536 (DTSCLKWGFKRCGSRGSCRLYDSNVFRHIYLGLT) are extracellular. Residues 537 to 554 (VILGTVSIFLSIAVLFIL) form a helical membrane-spanning segment. The Cytoplasmic segment spans residues 555-602 (KKNYVSKHRNFITKRERTMVSTRFQKENCTTSDHLLQPKYWPGKETQL).

Belongs to the organo anion transporter (TC 2.A.60) family.

The protein localises to the cell membrane. It catalyses the reaction 3,3',5'-triiodo-L-thyronine(out) = 3,3',5'-triiodo-L-thyronine(in). The enzyme catalyses L-thyroxine(out) = L-thyroxine(in). It carries out the reaction L-thyroxine sulfate(out) = L-thyroxine sulfate(in). Mediates the Na(+)-independent high affinity transport of organic anions such as the thyroid hormones L-thyroxine (T4), L-thyroxine sulfate (T4S), and 3,3',5'-triiodo-L-thyronine (reverse T3, rT3) at the plasma membrane. Regulates T4 levels in different brain regions by transporting T4, and also by serving as an export pump for T4S, which is a source of T4 after hydrolysis by local sulfatases. Increases the access of these substrates to the intracellular sites where they are metabolized by the deiodinases. Other potential substrates, such as triiodothyronine (T3), 17-beta-glucuronosyl estradiol (17beta-estradiol 17-O-(beta-D-glucuronate)), estrone-3-sulfate (E1S) and sulfobromophthalein (BSP) are transported with much lower efficiency. Transports T4 and E1S in a pH-insensitive manner. Facilitates the transport of thyroid hormones across the blood-brain barrier and into glia and neuronal cells in the brain. The sequence is that of Solute carrier organic anion transporter family member 1C1 (SLCO1C1) from Macaca fascicularis (Crab-eating macaque).